A 96-amino-acid chain; its full sequence is Small ribosomal subunit protein uS17 (96 aa).

It belongs to the universal ribosomal protein uS17 family. In terms of assembly, part of the 30S ribosomal subunit.

In terms of biological role, one of the primary rRNA binding proteins, it binds specifically to the 5'-end of 16S ribosomal RNA. This chain is Small ribosomal subunit protein uS17, found in Deinococcus radiodurans (strain ATCC 13939 / DSM 20539 / JCM 16871 / CCUG 27074 / LMG 4051 / NBRC 15346 / NCIMB 9279 / VKM B-1422 / R1).